The sequence spans 156 residues: Regulatory protein RecX (156 aa).

This sequence belongs to the RecX family.

It is found in the cytoplasm. In terms of biological role, modulates RecA activity. This chain is Regulatory protein RecX, found in Pseudomonas putida (strain ATCC 700007 / DSM 6899 / JCM 31910 / BCRC 17059 / LMG 24140 / F1).